The following is a 219-amino-acid chain: Translation initiation factor IF-3 (219 aa).

Belongs to the IF-3 family. Monomer.

It is found in the cytoplasm. Functionally, IF-3 binds to the 30S ribosomal subunit and shifts the equilibrium between 70S ribosomes and their 50S and 30S subunits in favor of the free subunits, thus enhancing the availability of 30S subunits on which protein synthesis initiation begins. In Prochlorococcus marinus (strain MIT 9303), this protein is Translation initiation factor IF-3.